The chain runs to 500 residues: MTELVQDENKLIAERRAKLDHIRTQCPANAHPNTWERSHKAAELQAQYGENTKEELEALGYQTSIAGRVMAKRGPFLVIQDVSGRIQAYAGKPVQGDLKERYQGLDIGDIIGVKGQLHLSGKGDLYVNMEEYQLLTKALRPLPEKFHGLTDQETRYRQRYVDLIVNEESRNAFIMRSKVVSAIRNFMIKKEFMEVETPMMHVIPGGASARPFVTHHNALDMAMYLRIAPELYLKRLVVGGFERVFEINRNFRNEGLSPRHNPEFTMMEFYMAYADYQDLMDLTEEMLSSIAIDLLGSAQMPYGEHTVDFGGPYARLSMLEAIQKYNPENATIQAMTYEQVKDVEFMRDLASSLGIKLEKFWTCGQLLEEIFGETAEPKLMQPTFITGYPADISPLARRNDNNDFITDRFEFFIGGREVANGFSELNDAQDQDNRFKAQVNAKDAGDDEAMFYDADYITALEHGLPPTAGQGIGIDRLVMLFTNTHTIRDVILFPAMRPQA.

Glu410 and Glu417 together coordinate Mg(2+).

Belongs to the class-II aminoacyl-tRNA synthetase family. In terms of assembly, homodimer. It depends on Mg(2+) as a cofactor.

It is found in the cytoplasm. It catalyses the reaction tRNA(Lys) + L-lysine + ATP = L-lysyl-tRNA(Lys) + AMP + diphosphate. This is Lysine--tRNA ligase from Shewanella denitrificans (strain OS217 / ATCC BAA-1090 / DSM 15013).